The chain runs to 73 residues: uncharacterized protein (73 aa).

2 helical membrane passes run 4–24 (LIPV…SPCV) and 51–71 (AGAI…IIAL).

It localises to the cell membrane. This is an uncharacterized protein from Escherichia coli O157:H7.